The chain runs to 430 residues: Serine carboxypeptidase-like 13 (430 aa).

The signal sequence occupies residues 1 to 22; that stretch reads MSLTLEFLLLLIVLILSHHAHS. Cystine bridges form between Cys81-Cys319, Cys240-Cys254, and Cys278-Cys285. A glycan (N-linked (GlcNAc...) asparagine) is linked at Asn102. The active site involves Ser177. Asn299 and Asn323 each carry an N-linked (GlcNAc...) asparagine glycan. The active site involves Asp355. N-linked (GlcNAc...) asparagine glycosylation is present at Asn371. His408 is a catalytic residue.

It belongs to the peptidase S10 family. In terms of tissue distribution, expression not detected.

It localises to the secreted. It carries out the reaction 2 1-O-(trans-sinapoyl)-beta-D-glucose = 1,2-di-O-sinapoyl beta-D-glucose + D-glucose. Functionally, catalyzes the formation of 1,2-bis-O-sinapoyl beta-D-glucoside. The polypeptide is Serine carboxypeptidase-like 13 (SCPL13) (Arabidopsis thaliana (Mouse-ear cress)).